A 505-amino-acid chain; its full sequence is ATP nucleosidase Cap17 (505 aa).

The cyclic oligonucleotide sensing-domain stretch occupies residues 1-229 (MTNTNNEYVL…RLSEIAVELL (229 aa)). Residues 239-505 (LHTPSVLILT…DYLQHGWIRA (267 aa)) are purine nucleoside phosphorylase domain.

It belongs to the Cap17 family.

It carries out the reaction ATP + H2O = D-ribose 5-triphosphate + adenine. It catalyses the reaction dATP + H2O = 2-deoxyribose 5-triphosphate + adenine. Functionally, effector protein with (d)ATP degrading activity of a CBASS antivirus system. CBASS (cyclic oligonucleotide-based antiphage signaling system) provides immunity against bacteriophage. A CD-NTase protein synthesizes cyclic nucleotides in response to infection; these serve as specific second messenger signals. The signals activate a diverse range of effectors, leading to bacterial cell death and thus abortive phage infection. A type III CBASS system. Expression of this CBASS system (Cap18-Cap6-Cap7-CdnC-CapW-Cap17) in a susceptible E.coli (strain MG1655) confers resistance to bacteriophage P1, leading to cell lysis. By 50 minutes post-infection, ATP levels are markedly reduced while dATP has been eliminated. The C-terminal purine nucleoside phosphorylase (PNP) domain cleaves the N-glycosidic bond of (d)ATP to release adenine and a sugar triphosphate; has no activity on other (d)NTPs, nor on DNA or RNA. In vivo during phage infection has pleoitropic effects on nucleotide accumulation. This protein may be activated by the cognate CD-NTase (CdnC). This is ATP nucleosidase Cap17 from Escherichia coli (strain KTE188).